A 246-amino-acid polypeptide reads, in one-letter code: tRNA (guanine-N(1)-)-methyltransferase (246 aa).

S-adenosyl-L-methionine is bound by residues Gly-113 and 132 to 137; that span reads LGDFVV.

The protein belongs to the RNA methyltransferase TrmD family. In terms of assembly, homodimer.

The protein localises to the cytoplasm. The catalysed reaction is guanosine(37) in tRNA + S-adenosyl-L-methionine = N(1)-methylguanosine(37) in tRNA + S-adenosyl-L-homocysteine + H(+). Specifically methylates guanosine-37 in various tRNAs. In Latilactobacillus sakei subsp. sakei (strain 23K) (Lactobacillus sakei subsp. sakei), this protein is tRNA (guanine-N(1)-)-methyltransferase.